A 514-amino-acid chain; its full sequence is MKEAGQMQNLESARAGRSVSTQTGSMTGQIPRLSKVNLFTLLSLWMELFPAEAQRQKSQKNEEGKHGPLGDNEERTRVSTDKRQVKRTGLVVVKNMKIVGLHCSSEDLHAGQIALIKHGSRLKNCDLYFSRKPCSACLKMIVNAGVNRISYWPADPEISLLTEASSSEDAKLDAKAVERLKSNSRAHVCVLLQPLVCYMVQFVEETSYKCDFIQKITKTLPDANTDFYYECKQERIKEYEMLFLVSNEEMHKQILMTIGLENLCENPYFSNLRQNMKDLILLLATVASSVPNFKHFGFYRSNPEQINEIHNQSLPQEIARHCMVQARLLAYRTEDHKTGVGAVIWAEGKSRSCDGTGAMYFVGCGYNAFPVGSEYADFPHMDDKQKDREIRKFRYIIHAEQNALTFRCQEIKPEERSMIFVTKCPCDECVPLIKGAGIKQIYAGDVDVGKKKADISYMRFGELEGVSKFTWQLNPSGAYGLEQNEPERRENGVLRPVPQKEEQHQDKKLRLGIH.

Composition is skewed to polar residues over residues 1–11 (MKEAGQMQNLE) and 18–27 (SVSTQTGSMT). 2 disordered regions span residues 1–27 (MKEA…GSMT) and 55–83 (RQKS…TDKR). Basic and acidic residues predominate over residues 59–83 (QKNEEGKHGPLGDNEERTRVSTDKR). A CMP/dCMP-type deaminase 1 domain is found at 70–168 (GDNEERTRVS…SLLTEASSSE (99 aa)). Zn(2+) is bound by residues His109, Cys134, and Cys137. A Nuclear export signal motif is present at residues 271-283 (NLRQNMKDLILLL). The CMP/dCMP-type deaminase 2 domain occupies 317 to 482 (EIARHCMVQA…LNPSGAYGLE (166 aa)). Residue His398 participates in Zn(2+) binding. Glu400 acts as the Proton donor in catalysis. Zn(2+) contacts are provided by Cys426 and Cys429. The tract at residues 480–514 (GLEQNEPERRENGVLRPVPQKEEQHQDKKLRLGIH) is disordered. A compositionally biased stretch (basic and acidic residues) spans 485-514 (EPERRENGVLRPVPQKEEQHQDKKLRLGIH). The Bipartite nuclear localization signal motif lies at 488–510 (RRENGVLRPVPQKEEQHQDKKLR).

The protein belongs to the cytidine and deoxycytidylate deaminase family. The cofactor is Zn(2+). As to expression, widely expressed. Expressed at high levels in the testis.

Its subcellular location is the cytoplasm. The protein localises to the nucleus. The enzyme catalyses 2'-deoxycytidine + H2O + H(+) = 2'-deoxyuridine + NH4(+). It catalyses the reaction cytidine + H2O + H(+) = uridine + NH4(+). Functionally, catalyzes the deamination of cytidine and deoxycytidine into uridine and deoxyuridine, respectively. May play an important role in testicular development and spermatogenesis. The polypeptide is Cytidine and dCMP deaminase domain-containing protein 1 (CDADC1) (Homo sapiens (Human)).